Reading from the N-terminus, the 361-residue chain is 1-deoxy-D-xylulose 5-phosphate reductoisomerase (361 aa).

Residues T12, G13, S14, I15, G38, and N102 each contribute to the NADPH site. Residue K103 participates in 1-deoxy-D-xylulose 5-phosphate binding. Residue E104 coordinates NADPH. Residue D126 coordinates Mn(2+). S127, E128, S152, and H175 together coordinate 1-deoxy-D-xylulose 5-phosphate. Residue E128 coordinates Mn(2+). Position 181 (G181) interacts with NADPH. Residues S188, N193, K194, and E197 each coordinate 1-deoxy-D-xylulose 5-phosphate. Mn(2+) is bound at residue E197.

It belongs to the DXR family. Mg(2+) serves as cofactor. Mn(2+) is required as a cofactor.

The catalysed reaction is 2-C-methyl-D-erythritol 4-phosphate + NADP(+) = 1-deoxy-D-xylulose 5-phosphate + NADPH + H(+). Its pathway is isoprenoid biosynthesis; isopentenyl diphosphate biosynthesis via DXP pathway; isopentenyl diphosphate from 1-deoxy-D-xylulose 5-phosphate: step 1/6. Its function is as follows. Catalyzes the NADPH-dependent rearrangement and reduction of 1-deoxy-D-xylulose-5-phosphate (DXP) to 2-C-methyl-D-erythritol 4-phosphate (MEP). This chain is 1-deoxy-D-xylulose 5-phosphate reductoisomerase, found in Leifsonia xyli subsp. xyli (strain CTCB07).